The following is a 156-amino-acid chain: 17.4 kDa class I heat shock protein (156 aa).

In terms of domain architecture, sHSP spans 42–156 (DVAAFTNAKV…PEVKSVDISG (115 aa)).

This sequence belongs to the small heat shock protein (HSP20) family. As to quaternary structure, may form oligomeric structures. Binds to AKR2A.

The protein localises to the cytoplasm. In Arabidopsis thaliana (Mouse-ear cress), this protein is 17.4 kDa class I heat shock protein (HSP17.4A).